The sequence spans 186 residues: FMN reductase (NADPH) (186 aa).

This sequence belongs to the SsuE family.

It carries out the reaction FMNH2 + NADP(+) = FMN + NADPH + 2 H(+). This is FMN reductase (NADPH) (msuE) from Pseudomonas aeruginosa (strain ATCC 15692 / DSM 22644 / CIP 104116 / JCM 14847 / LMG 12228 / 1C / PRS 101 / PAO1).